We begin with the raw amino-acid sequence, 448 residues long: MSDIRHSLLRRDALSAAKEVLYHLDIYFSSQLQSAPLPIVDKGSVELLEEFVFQVPKERGAQPKRLNSLQELQLLEIMCSYFQEQSKDSVRQIIFSSLFSPQGNKADDSRMSLLGKLVSMAVAVCRIPVLECAASWLQRTPVVYCVRLARVLVEDYCCLVPGSVQTLKQIFSASPRFCCQFITSVTALYDLSSDDLIPPLDLLEMIVSWIFEDPRLILITFLNTPIAANLPIGFLELTPLIGLIRWCVKAPLAYKRKKPCLSNGHISHKVAKDSGASTDRDSHLLYSKLHLSVLQVLMTLQLHLTEKNLYGRLGLILFDHMVPLVEEINRLADELNPLNASQEIELALDRLAQALQVAMTSGALLCTRDDLRTLCSRLPHNNLLQLVISGPVQQSPHTALPPGFYPHIHTPPLAYGAVPAHPAAHPALPTHPGHTFISGVTFPFRPIR.

It belongs to the Integrator subunit 15 family. In terms of assembly, component of the Integrator complex, composed of core subunits INTS1, INTS2, INTS3, INTS4, INTS5, INTS6, INTS7, INTS8, INTS9/RC74, INTS10, INTS11/CPSF3L, INTS12, INTS13, INTS14 and INTS15. The core complex associates with protein phosphatase 2A subunits PPP2CA and PPP2R1A, to form the Integrator-PP2A (INTAC) complex. INTS15 is part of the tail subcomplex, composed of INTS10, INTS13, INTS14 and INTS15.

It localises to the nucleus. The protein resides in the chromosome. Its function is as follows. Component of the integrator complex, a multiprotein complex that terminates RNA polymerase II (Pol II) transcription in the promoter-proximal region of genes. The integrator complex provides a quality checkpoint during transcription elongation by driving premature transcription termination of transcripts that are unfavorably configured for transcriptional elongation: the complex terminates transcription by (1) catalyzing dephosphorylation of the C-terminal domain (CTD) of Pol II subunit POLR2A/RPB1 and SUPT5H/SPT5, (2) degrading the exiting nascent RNA transcript via endonuclease activity and (3) promoting the release of Pol II from bound DNA. The integrator complex is also involved in terminating the synthesis of non-coding Pol II transcripts, such as enhancer RNAs (eRNAs), small nuclear RNAs (snRNAs), telomerase RNAs and long non-coding RNAs (lncRNAs). INTS15 is part of the integrator tail module that acts as a platform for the recruitment of transcription factors at promoters. Within the integrator complex, INTS15 is required to bridge different integrator modules. The chain is Integrator complex subunit 15 from Mus musculus (Mouse).